The sequence spans 336 residues: Small ribosomal subunit protein uS2 (336 aa).

The protein belongs to the universal ribosomal protein uS2 family.

The chain is Small ribosomal subunit protein uS2 from Beijerinckia indica subsp. indica (strain ATCC 9039 / DSM 1715 / NCIMB 8712).